An 85-amino-acid polypeptide reads, in one-letter code: Putative membrane protein insertion efficiency factor (85 aa).

Belongs to the UPF0161 family.

The protein localises to the cell inner membrane. Could be involved in insertion of integral membrane proteins into the membrane. The chain is Putative membrane protein insertion efficiency factor from Escherichia coli O6:H1 (strain CFT073 / ATCC 700928 / UPEC).